We begin with the raw amino-acid sequence, 150 residues long: D-aminoacyl-tRNA deacylase (150 aa).

The Gly-cisPro motif, important for rejection of L-amino acids signature appears at 138-139 (GP).

This sequence belongs to the DTD family. As to quaternary structure, homodimer.

It localises to the cytoplasm. It catalyses the reaction glycyl-tRNA(Ala) + H2O = tRNA(Ala) + glycine + H(+). The enzyme catalyses a D-aminoacyl-tRNA + H2O = a tRNA + a D-alpha-amino acid + H(+). Its function is as follows. An aminoacyl-tRNA editing enzyme that deacylates mischarged D-aminoacyl-tRNAs. Also deacylates mischarged glycyl-tRNA(Ala), protecting cells against glycine mischarging by AlaRS. Acts via tRNA-based rather than protein-based catalysis; rejects L-amino acids rather than detecting D-amino acids in the active site. By recycling D-aminoacyl-tRNA to D-amino acids and free tRNA molecules, this enzyme counteracts the toxicity associated with the formation of D-aminoacyl-tRNA entities in vivo and helps enforce protein L-homochirality. The chain is D-aminoacyl-tRNA deacylase from Cytophaga hutchinsonii (strain ATCC 33406 / DSM 1761 / CIP 103989 / NBRC 15051 / NCIMB 9469 / D465).